A 105-amino-acid chain; its full sequence is Large ribosomal subunit protein bL21 (105 aa).

The protein belongs to the bacterial ribosomal protein bL21 family. As to quaternary structure, part of the 50S ribosomal subunit. Contacts protein L20.

Functionally, this protein binds to 23S rRNA in the presence of protein L20. The polypeptide is Large ribosomal subunit protein bL21 (Stenotrophomonas maltophilia (strain R551-3)).